The following is a 119-amino-acid chain: MARVKTGPMSRKRHKKILKLARGYRNAHSKLFRTAHQSVMKALSYAYAHRKKKKGDFRKIWITRINAAARMNGISYSVMMNGLKKAGVAVNRKMLADLAVNDLPAFAKLVDVAKAKGNA.

The protein belongs to the bacterial ribosomal protein bL20 family.

In terms of biological role, binds directly to 23S ribosomal RNA and is necessary for the in vitro assembly process of the 50S ribosomal subunit. It is not involved in the protein synthesizing functions of that subunit. In Heliobacterium modesticaldum (strain ATCC 51547 / Ice1), this protein is Large ribosomal subunit protein bL20.